The sequence spans 349 residues: uncharacterized protein (349 aa).

The chain crosses the membrane as a helical span at residues 16-36 (LVITIISTGLIFGMTLVLTGL). The interval 111–139 (FGAPEHGPGMPRVSEGRSPSKPDEVAASS) is disordered. Basic and acidic residues predominate over residues 124–134 (SEGRSPSKPDE). The next 3 helical transmembrane spans lie at 231–251 (ISIV…SVVY), 284–304 (VIAL…APLF), and 307–327 (IVAV…VIGL).

This sequence belongs to the ABC-4 integral membrane protein family. The complex is composed of two ATP-binding proteins (MT0079), two transmembrane proteins (MT0078) and a solute-binding protein.

The protein resides in the cell membrane. Its function is as follows. Probably part of an ABC transporter complex. Probably responsible for the translocation of the substrate across the membrane. This is an uncharacterized protein from Mycobacterium tuberculosis (strain CDC 1551 / Oshkosh).